Consider the following 300-residue polypeptide: ESX-5 secretion-associated protein EspG5 (300 aa).

It belongs to the EspG family. Interacts specifically with ESX-5-dependent PE/PPE proteins. Forms a 1:1:1 heterotrimeric complex with the PE25/PPE41 dimer, via PPE41. Binding of EspG5 does not cause conformational changes in the PE25/PPE41 dimer. Forms a 1:1:1 heterotrimeric complex with the PE8/PPE15 dimer, via PPE15.

The protein resides in the cytoplasm. In terms of biological role, specific chaperone for cognate PE/PPE proteins. Plays an important role in preventing aggregation of PE/PPE dimers. This is ESX-5 secretion-associated protein EspG5 from Mycobacterium tuberculosis (strain ATCC 25618 / H37Rv).